The chain runs to 287 residues: GDT1-like protein C17G8.08c (287 aa).

The next 7 membrane-spanning stretches (helical) occupy residues 7–27 (WAIIAVLLSTVVAKKIVGEGM), 50–70 (LIFSISMIFGCEIGDKTFIVA), 89–109 (ALFIMTLLGVLLGHAAPLLFP), 112–132 (LTDILGGVLFVIFGIKMLMEA), 194–214 (VMATLFSPLFIKAFALTFVSE), 232–252 (VYGVFMGANVGHACCTALAVI), and 267–287 (MFIGGILFIAFGLVYFYQGFF).

It belongs to the GDT1 family.

It is found in the membrane. The sequence is that of GDT1-like protein C17G8.08c from Schizosaccharomyces pombe (strain 972 / ATCC 24843) (Fission yeast).